Consider the following 141-residue polypeptide: MDDSQWVSIHIRDRLAQGNITIRESFLYEGQFHSPEDEKKALTEDDIDQLIIPSEGIGEVCARGRRGSEGWMDLFDGEKKICELHWDNRTKRPSNEFEVIDGDKDYKIECSGWSPQAGPLGHVFIDISAAKKKAAAAAAAK.

This sequence belongs to the aegerolysin family.

It localises to the cytoplasm. In terms of biological role, hemolysins are potential virulence factors. Has hemolytic activity against sheep erythrocytes in vitro. This chain is Terrelysin, found in Aspergillus terreus (strain NIH 2624 / FGSC A1156).